The sequence spans 31 residues: Cytochrome b6-f complex subunit 6 (31 aa).

A helical membrane pass occupies residues 4–24; that stretch reads LISYISLLAGFVIIASVFYLA.

The protein belongs to the PetL family. In terms of assembly, the 4 large subunits of the cytochrome b6-f complex are cytochrome b6, subunit IV (17 kDa polypeptide, PetD), cytochrome f and the Rieske protein, while the 4 small subunits are PetG, PetL, PetM and PetN. The complex functions as a dimer.

It is found in the plastid. It localises to the chloroplast thylakoid membrane. Functionally, component of the cytochrome b6-f complex, which mediates electron transfer between photosystem II (PSII) and photosystem I (PSI), cyclic electron flow around PSI, and state transitions. PetL is important for photoautotrophic growth as well as for electron transfer efficiency and stability of the cytochrome b6-f complex. The chain is Cytochrome b6-f complex subunit 6 from Tupiella akineta (Green alga).